Reading from the N-terminus, the 584-residue chain is Alkaline nuclease (584 aa).

The tract at residues 409–429 is disordered; it reads GGGADHHLRGSPGDSPPPIPF.

This sequence belongs to the herpesviridae alkaline nuclease family. In terms of assembly, interacts with major DNA-binding protein; this interaction increases the nuclease processivity of the alkaline exonuclease.

Its subcellular location is the host nucleus. The protein resides in the host cytoplasm. Functionally, plays a role in processing non linear or branched viral DNA intermediates in order to promote the production of mature packaged unit-length linear progeny viral DNA molecules. Exhibits endonuclease and exonuclease activities and accepts both double-stranded and single-stranded DNA as substrate. Exonuclease digestion of DNA is in the 5'-&gt; 3' direction and the products are 5'-monophosphate nucleosides. Additionally, forms a recombinase with the major DNA-binding protein, which displays strand exchange activity. The sequence is that of Alkaline nuclease (UL98) from Homo sapiens (Human).